A 1070-amino-acid chain; its full sequence is DNA-directed RNA polymerase subunit beta (1070 aa).

It belongs to the RNA polymerase beta chain family. In plastids the minimal PEP RNA polymerase catalytic core is composed of four subunits: alpha, beta, beta', and beta''. When a (nuclear-encoded) sigma factor is associated with the core the holoenzyme is formed, which can initiate transcription.

The protein resides in the plastid. It localises to the chloroplast. It catalyses the reaction RNA(n) + a ribonucleoside 5'-triphosphate = RNA(n+1) + diphosphate. In terms of biological role, DNA-dependent RNA polymerase catalyzes the transcription of DNA into RNA using the four ribonucleoside triphosphates as substrates. The protein is DNA-directed RNA polymerase subunit beta of Morus indica (Mulberry).